The following is a 361-amino-acid chain: Mannose-1-phosphate guanyltransferase (361 aa).

It belongs to the transferase hexapeptide repeat family.

The protein localises to the cytoplasm. It catalyses the reaction alpha-D-mannose 1-phosphate + GTP + H(+) = GDP-alpha-D-mannose + diphosphate. It participates in nucleotide-sugar biosynthesis; GDP-alpha-D-mannose biosynthesis; GDP-alpha-D-mannose from alpha-D-mannose 1-phosphate (GTP route): step 1/1. Its function is as follows. Involved in cell wall synthesis where it is required for glycosylation. Involved in cell cycle progression through cell-size checkpoint. The protein is Mannose-1-phosphate guanyltransferase (MPG1) of Eremothecium gossypii (strain ATCC 10895 / CBS 109.51 / FGSC 9923 / NRRL Y-1056) (Yeast).